Consider the following 302-residue polypeptide: Meiotically up-regulated gene 129 protein (302 aa).

Functionally, has a role in meiosis. This is Meiotically up-regulated gene 129 protein (mug129) from Schizosaccharomyces pombe (strain 972 / ATCC 24843) (Fission yeast).